A 70-amino-acid polypeptide reads, in one-letter code: Bowman-Birk type proteinase inhibitor A7 (70 aa).

Intrachain disulfides connect C12-C31, C18-C29, C38-C45, and C42-C59.

This sequence belongs to the Bowman-Birk serine protease inhibitor family. Expressed in bulb (at protein level).

In terms of biological role, serine protease inhibitor. Strongly inhibits trypsin (Ki = 7.1 nM) and almost completely inhibits elastase. Also inhibits chymotrypsin (Ki = 19 nM). Does not inhibit bacterial subtilisin. In Hyacinthus orientalis (Common hyacinth), this protein is Bowman-Birk type proteinase inhibitor A7.